A 585-amino-acid chain; its full sequence is Poly(A) RNA polymerase, mitochondrial (585 aa).

A mitochondrion-targeting transit peptide spans 1 to 37; that stretch reads MAARGVGLLTRLPVCSQRRNRIPRSISRLLSCPGTIA. Lys90 carries the N6-acetyllysine modification. Residues 107 to 109 and 244 to 245 each bind ATP; these read YES and GC. Mg(2+) is bound by residues Asp246 and Asp248. The PAP-associated domain occupies 441-486; sequence ELLIKEFFEYFGNFAFNKNSINIRQGREQNKPDSSPLYIQNPFETS. The disordered stretch occupies residues 537 to 585; it reads PGSGHTSLSRKKKKKPMSEKVKGLLASIKSNSPDSSTDTSGKRTISTQA. Positions 564–585 are enriched in polar residues; the sequence is IKSNSPDSSTDTSGKRTISTQA.

Belongs to the DNA polymerase type-B-like family. In terms of assembly, homodimer. Mg(2+) is required as a cofactor. Requires Mn(2+) as cofactor.

It localises to the cytoplasm. It is found in the mitochondrion. The enzyme catalyses RNA(n) + ATP = RNA(n)-3'-adenine ribonucleotide + diphosphate. Polymerase that creates the 3' poly(A) tail of mitochondrial transcripts. Can use all four nucleotides, but has higher activity with ATP and UTP (in vitro). Plays a role in replication-dependent histone mRNA degradation. May be involved in the terminal uridylation of mature histone mRNAs before their degradation is initiated. Might be responsible for the creation of some UAA stop codons which are not encoded in mtDNA. This is Poly(A) RNA polymerase, mitochondrial (Mtpap) from Mus musculus (Mouse).